A 1890-amino-acid chain; its full sequence is MRRKLLLLLCFIGLFSLISTAPAPNNVGLESEFTEGHAETINLEEVEFNHPSILPEHPDNFRQDKLAARKRQSLYVTKTRLPPNLYAIDYSLWFQPYFPSPGVQYAPEKNFTFDGRASIQVEALVASDRFILNAYNFKIQSYKVVDIDGTVVPINSISQDDTTQQLSLITNANGVVAGQIYNIEFVYTGIINPYTDGGVYYTSYNDPQGNTHYMIATHMEPFSARKVFPSLDEPSYKAKFTITVQYPASQVALSNMMETEPTKIDNIWSTITFPQTPKMSSYLIAFAVGPYVNSQYVNKHNTLTRAWGWPGTEQYLQFAAQNAGECLYQLGEYTGIKFPLSKADQLGMPEFLAGAMENWGLIIYKYQYIAYNPTTMTTRNMEAAAKVMCHELAHQWFGDLVTTAWWDDLFLNEGFADYFMTFIQKSVYPQQATYLDTLQVLDELQVGLTADVRYDAHPLVYPDGPAFDDITYNKGASMLRMLSDVLGADVFKQGIRAYLQKMQYSNANDFDLFSTLTDTAKSNNILDWCGLPLNVTDFMQPYIHQTNHPLIRYNNNQKIGGSTFSQEPFLDISDLTATPWNYTWSIPLTSANLRHADPYKQWLPRQQGCANMNENIQEERIKEPNKRAVQWELTSITSATYGRIIYDDIGFDRILKLIKQDDINDNLKLTLLADEYNYMLREKKANRPFGYNRFLDLAKVIFNTQSFTNYPSYGVFAQAQPVLEQIAQLYRDGIDAEFVPRLYKLFFQNSYNQLKWQDTSIWDTDTFSEVFLPFAVRYDIGDVQNRTLNMFANVKSACINSLNGTAWCNPYSTNLRKAIYCGAAKYAPATSDYFFQMLHSYNKEVITNPYFYQEYMALLEGMSCTQSPATLKVLIRLFTTSTLNPSTIFGFLKYNPAASDVLYNYFMANPQLVNSTMLDAYLDAMTYNWNSYFREGQLSTLMNTLTLTNDQFDIFDFYINRVSLMFEYKSTYALPTYNWLYDNLVVIGKTPWEKTPNIDAVFPYYKLDLQVNIPGSGPYQWYENMTFSATSTVTFQLVSPTSSITINAHRLMFDPVSIRLYNENDENAHTPIPIDFSKVMKDYDKGTVTIPTMNNTVLYPNQYSLFIEYTGFIFQNPDEGDASNTYLGGLNNRKGWIFTTDFEGGPGARSLLPCWDEPSYKGQFEVSVFHPTDMIALSNEVDIQRTIYDNGWTTTKFATTNQMSTYLLALCVGHFSNLATVTRTGVLTRVWTWSGMEQYGEFALNVTAGTIDFMENYFSYDFPLKKLDVMALPEYTMNAGAMENWGLIIGEYSLFMFDPDYATTRDITEVAETTAHEVVHQWFGDIVTLDWWNDIFLNEGFAQYWFANGIDNTFPEQHAYSIDYNRFYMNHIALKYDCIPGVAKPVISDTPPVFGIEPYYKGSALLNLLNNVLTPAVFQEGLSSYLTQYGYVNASPRNLWTSLTVAAQRHNITDWNGQPLDVSSFMDPYTLQTSYPIITLTLRGTSTVQANQQSCMSDETLWNVPLFTQTPGALDFNWFVNFTGGNDATWLRPLPTGYRVDNAGSTSFARINYDDKSWYSIQAQLLSNMNTMSSTTRAMLLDDANFFYQSGRWEMTKFLDLTLYLVNEDSLAPWEQAIEFFTEMLNRFQYQPEIDTVRNYVIQITKNAVSKFQWNTNGLWANDRIVQLLVNVNNLAVNRQSRQVALTLFNNFVLKCKYSLSGTGKCSGIHPNLRQPTYCYGLRQSNNIDDFTTVNNLYSWFVQNAGYLQTDGSNLLNALGCVQNLDLQKTMLRSILSGDYPPSLLNSIAVHDDSSDVLYNFLLDNTQDILNAPFDFSLYVKAMFQNWSTSNQLELAKDFQNSSNYNLLNAAQKNIYKQGILTVNSNANWMLIYKTPFLEWIQKNFGAPNL.

The N-terminal stretch at 1-20 is a signal peptide; it reads MRRKLLLLLCFIGLFSLIST. N110 carries N-linked (GlcNAc...) asparagine glycosylation. Residues E220 and 354-358 contribute to the substrate site; that span reads GAMEN. H390 is a binding site for Zn(2+). The active-site Proton acceptor is E391. H394 and E413 together coordinate Zn(2+). N-linked (GlcNAc...) asparagine glycans are attached at residues N534, N581, N785, N803, N914, N1024, and N1094. Residue E1143 coordinates substrate. The N-linked (GlcNAc...) asparagine glycan is linked to N1245. 1280-1284 provides a ligand contact to substrate; the sequence is GAMEN. H1316 contacts Zn(2+). Residue E1317 is the Proton acceptor of the active site. Residues H1320 and E1339 each coordinate Zn(2+). 4 N-linked (GlcNAc...) asparagine glycosylation sites follow: N1451, N1521, N1826, and N1841.

This sequence belongs to the peptidase M1 family. Requires Zn(2+) as cofactor.

Putative aminopeptidase which plays a role in oocyte maturation. The sequence is that of Putative aminopeptidase-2 from Caenorhabditis elegans.